The primary structure comprises 212 residues: Thymidylate kinase (212 aa).

Position 10 to 17 (10 to 17 (GLEGAGKT)) interacts with ATP.

Belongs to the thymidylate kinase family.

The enzyme catalyses dTMP + ATP = dTDP + ADP. Functionally, phosphorylation of dTMP to form dTDP in both de novo and salvage pathways of dTTP synthesis. The sequence is that of Thymidylate kinase from Yersinia pestis bv. Antiqua (strain Antiqua).